Reading from the N-terminus, the 348-residue chain is D-erythrose-4-phosphate dehydrogenase (348 aa).

12 to 13 (RI) lines the NAD(+) pocket. Residues 154-156 (SCT), R200, 213-214 (TR), and R236 each bind substrate. C155 acts as the Nucleophile in catalysis. Position 318 (N318) interacts with NAD(+).

Belongs to the glyceraldehyde-3-phosphate dehydrogenase family. Epd subfamily. In terms of assembly, homotetramer.

Its subcellular location is the cytoplasm. It catalyses the reaction D-erythrose 4-phosphate + NAD(+) + H2O = 4-phospho-D-erythronate + NADH + 2 H(+). The protein operates within cofactor biosynthesis; pyridoxine 5'-phosphate biosynthesis; pyridoxine 5'-phosphate from D-erythrose 4-phosphate: step 1/5. In terms of biological role, catalyzes the NAD-dependent conversion of D-erythrose 4-phosphate to 4-phosphoerythronate. The sequence is that of D-erythrose-4-phosphate dehydrogenase from Erwinia tasmaniensis (strain DSM 17950 / CFBP 7177 / CIP 109463 / NCPPB 4357 / Et1/99).